Reading from the N-terminus, the 209-residue chain is Superoxide dismutase [Mn/Fe] (209 aa).

4 residues coordinate Fe(3+): histidine 38, histidine 90, aspartate 172, and histidine 176. Mn(2+) contacts are provided by histidine 38, histidine 90, aspartate 172, and histidine 176.

Belongs to the iron/manganese superoxide dismutase family. The cofactor is Mn(2+). Fe(3+) serves as cofactor.

It catalyses the reaction 2 superoxide + 2 H(+) = H2O2 + O2. Its function is as follows. Destroys superoxide anion radicals which are normally produced within the cells and which are toxic to biological systems. Catalyzes the dismutation of superoxide anion radicals into O2 and H2O2 by successive reduction and oxidation of the transition metal ion at the active site. The chain is Superoxide dismutase [Mn/Fe] (sodB) from Rickettsia prowazekii (strain Madrid E).